The primary structure comprises 144 residues: Putative pre-16S rRNA nuclease (144 aa).

The protein belongs to the YqgF nuclease family.

It is found in the cytoplasm. Could be a nuclease involved in processing of the 5'-end of pre-16S rRNA. The sequence is that of Putative pre-16S rRNA nuclease from Pseudomonas aeruginosa (strain LESB58).